Consider the following 195-residue polypeptide: Flagellar transcriptional regulator FlhC (195 aa).

Residues Cys-137, Cys-140, Cys-157, and Cys-160 each coordinate Zn(2+). Residues Arg-165–Ala-195 form a disordered region.

Belongs to the FlhC family. Heterohexamer composed of two FlhC and four FlhD subunits. Each FlhC binds a FlhD dimer, forming a heterotrimer, and a hexamer assembles by dimerization of two heterotrimers. The cofactor is Zn(2+).

Its subcellular location is the cytoplasm. Functionally, functions in complex with FlhD as a master transcriptional regulator that regulates transcription of several flagellar and non-flagellar operons by binding to their promoter region. Activates expression of class 2 flagellar genes, including fliA, which is a flagellum-specific sigma factor that turns on the class 3 genes. Also regulates genes whose products function in a variety of physiological pathways. This chain is Flagellar transcriptional regulator FlhC, found in Thauera aminoaromatica.